Reading from the N-terminus, the 107-residue chain is MASVRTMNDYHKRIEAADDKLIVLDFYATWCGPCKEMESTVKSLARKYSSKAVVLKIDVDKFEELTERYKVRSMPTFVFLRQNRRLASFAGADEHKLTNMMAKLVKA.

Positions 2-106 (ASVRTMNDYH…LTNMMAKLVK (105 aa)) constitute a Thioredoxin domain. Active-site nucleophile residues include Cys-31 and Cys-34. A disulfide bridge links Cys-31 with Cys-34.

The protein belongs to the thioredoxin family. Ovary specific. Expressed present in the nurse cells from stage 9 of ovary development and is transported into the oocyte. Expressed throughout oogenesis.

The protein resides in the nucleus. Its function is as follows. Participates in various redox reactions through the reversible oxidation of its active center dithiol to a disulfide and catalyzes dithiol-disulfide exchange reactions. As a reducing substrate of peroxiredoxin 1, thioredoxin 2 is preferred over thioredoxin 1. Required for female meiosis and early embryonic development. The polypeptide is Thioredoxin-1 (dhd) (Drosophila melanogaster (Fruit fly)).